The primary structure comprises 270 residues: 4-hydroxy-tetrahydrodipicolinate reductase (270 aa).

Residues 11–16 (GCQGRM) and glutamate 37 contribute to the NAD(+) site. An NADP(+)-binding site is contributed by arginine 38. NAD(+) is bound by residues 101-103 (GTT) and 125-128 (ASNF). Histidine 158 serves as the catalytic Proton donor/acceptor. A (S)-2,3,4,5-tetrahydrodipicolinate-binding site is contributed by histidine 159. Catalysis depends on lysine 162, which acts as the Proton donor. 168-169 (GT) lines the (S)-2,3,4,5-tetrahydrodipicolinate pocket.

It belongs to the DapB family.

Its subcellular location is the cytoplasm. The catalysed reaction is (S)-2,3,4,5-tetrahydrodipicolinate + NAD(+) + H2O = (2S,4S)-4-hydroxy-2,3,4,5-tetrahydrodipicolinate + NADH + H(+). It carries out the reaction (S)-2,3,4,5-tetrahydrodipicolinate + NADP(+) + H2O = (2S,4S)-4-hydroxy-2,3,4,5-tetrahydrodipicolinate + NADPH + H(+). It participates in amino-acid biosynthesis; L-lysine biosynthesis via DAP pathway; (S)-tetrahydrodipicolinate from L-aspartate: step 4/4. Catalyzes the conversion of 4-hydroxy-tetrahydrodipicolinate (HTPA) to tetrahydrodipicolinate. This Tolumonas auensis (strain DSM 9187 / NBRC 110442 / TA 4) protein is 4-hydroxy-tetrahydrodipicolinate reductase.